A 500-amino-acid chain; its full sequence is NAD(P)H-quinone oxidoreductase subunit 2 A, chloroplastic (500 aa).

13 helical membrane passes run 14–34 (LLLFDGSLIFPECILIFGLIL), 47–67 (IPWFYFISSTSLVMSITALLF), 89–109 (IFQFLILLCSTLSIPLSVEYI), 114–134 (MAITEFLLFILTATLGGMFLC), 139–159 (FITIFVAPECFSLCSYLLSGY), 173–193 (YLLMGGASSSILVHAFSWLYG), 217–237 (PGISIALIFITVGIGFKLSPA), 285–305 (WHLLLEILAILSMILGNLIAI), 313–333 (MLAYSSIGQIGYVIIGIIVGD), 344–364 (YMLFYISMNLGTFACIVLFGL), 385–405 (ALSLALCLLSLGGLPPLAGFF), 408–428 (LHLFWCGWQAGLSFLVSIGLL), and 474–494 (MIVCVIASTIPGISMNPIIAI).

It belongs to the complex I subunit 2 family. NDH is composed of at least 16 different subunits, 5 of which are encoded in the nucleus.

Its subcellular location is the plastid. The protein localises to the chloroplast thylakoid membrane. It catalyses the reaction a plastoquinone + NADH + (n+1) H(+)(in) = a plastoquinol + NAD(+) + n H(+)(out). The enzyme catalyses a plastoquinone + NADPH + (n+1) H(+)(in) = a plastoquinol + NADP(+) + n H(+)(out). In terms of biological role, NDH shuttles electrons from NAD(P)H:plastoquinone, via FMN and iron-sulfur (Fe-S) centers, to quinones in the photosynthetic chain and possibly in a chloroplast respiratory chain. The immediate electron acceptor for the enzyme in this species is believed to be plastoquinone. Couples the redox reaction to proton translocation, and thus conserves the redox energy in a proton gradient. In Pelargonium hortorum (Common geranium), this protein is NAD(P)H-quinone oxidoreductase subunit 2 A, chloroplastic.